Consider the following 185-residue polypeptide: UPF0200 protein TK1334 (185 aa).

Gly7–Ser14 contacts ATP.

It belongs to the UPF0200 family.

In Thermococcus kodakarensis (strain ATCC BAA-918 / JCM 12380 / KOD1) (Pyrococcus kodakaraensis (strain KOD1)), this protein is UPF0200 protein TK1334.